A 189-amino-acid chain; its full sequence is Elongation factor P (189 aa).

Position 34 is an N6-(3,6-diaminohexanoyl)-5-hydroxylysine (K34).

Belongs to the elongation factor P family. In terms of processing, may be beta-lysylated on the epsilon-amino group of Lys-34 by the combined action of EpmA and EpmB, and then hydroxylated on the C5 position of the same residue by EpmC (if this protein is present). Lysylation is critical for the stimulatory effect of EF-P on peptide-bond formation. The lysylation moiety may extend toward the peptidyltransferase center and stabilize the terminal 3-CCA end of the tRNA. Hydroxylation of the C5 position on Lys-34 may allow additional potential stabilizing hydrogen-bond interactions with the P-tRNA.

The protein localises to the cytoplasm. Its pathway is protein biosynthesis; polypeptide chain elongation. Involved in peptide bond synthesis. Alleviates ribosome stalling that occurs when 3 or more consecutive Pro residues or the sequence PPG is present in a protein, possibly by augmenting the peptidyl transferase activity of the ribosome. Modification of Lys-34 is required for alleviation. The protein is Elongation factor P of Halorhodospira halophila (strain DSM 244 / SL1) (Ectothiorhodospira halophila (strain DSM 244 / SL1)).